Consider the following 416-residue polypeptide: UDP-N-acetylglucosamine 1-carboxyvinyltransferase (416 aa).

22 to 23 is a phosphoenolpyruvate binding site; the sequence is KN. Arginine 92 lines the UDP-N-acetyl-alpha-D-glucosamine pocket. Residue cysteine 116 is the Proton donor of the active site. Cysteine 116 is subject to 2-(S-cysteinyl)pyruvic acid O-phosphothioketal. UDP-N-acetyl-alpha-D-glucosamine contacts are provided by aspartate 304 and isoleucine 326.

The protein belongs to the EPSP synthase family. MurA subfamily.

It is found in the cytoplasm. The enzyme catalyses phosphoenolpyruvate + UDP-N-acetyl-alpha-D-glucosamine = UDP-N-acetyl-3-O-(1-carboxyvinyl)-alpha-D-glucosamine + phosphate. The protein operates within cell wall biogenesis; peptidoglycan biosynthesis. Its function is as follows. Cell wall formation. Adds enolpyruvyl to UDP-N-acetylglucosamine. In Solidesulfovibrio magneticus (strain ATCC 700980 / DSM 13731 / RS-1) (Desulfovibrio magneticus), this protein is UDP-N-acetylglucosamine 1-carboxyvinyltransferase.